A 1159-amino-acid polypeptide reads, in one-letter code: Calcium-activated potassium channel subunit alpha-1 (1159 aa).

Residues 1–24 are Extracellular-facing; sequence EPNMDALIIPVTMEVPCDSRGQRM. The helical transmembrane segment at 25–45 threads the bilayer; that stretch reads WWAFLASSMVTFFGGLFIILL. Over 46–116 the chain is Cytoplasmic; sequence WRTLKYLWTV…MISAQTLTGR (71 aa). Residues C56, C57, and C59 are each lipidated (S-palmitoyl cysteine). Residues 117-137 form a helical membrane-spanning segment; it reads VLVVLVFALSIGALVIYFIDS. The Extracellular segment spans residues 138-152; the sequence is SNPIESCQNFYKDFT. The helical transmembrane segment at 153–173 threads the bilayer; that stretch reads LQIDMAFNVFFLLYFGLRFIA. Over 174–177 the chain is Cytoplasmic; that stretch reads ANDN. Residues 178-198 form a helical membrane-spanning segment; the sequence is LWFWLEVNSVVDFFTVPPVFV. Residues 199-202 are Extracellular-facing; sequence SVYL. The helical; Voltage-sensor transmembrane segment at 203–223 threads the bilayer; sequence NRSWLGLRFLRALRLIQFSEI. Residues 224 to 238 are Cytoplasmic-facing; it reads LQFLNILKTSNSIKL. The chain crosses the membrane as a helical span at residues 239 to 259; that stretch reads VNLLSIFISTWLTAAGFIHLV. Residues 260–273 lie on the Extracellular side of the membrane; the sequence is ENSGDPWENFQNSQ. Residues 274–296 constitute an intramembrane region (pore-forming); the sequence is ALTYWECVYLLMVTMSTVGYGDV. A Selectivity for potassium motif is present at residues 290–293; that stretch reads TVGY. Residues 297-305 are Extracellular-facing; the sequence is YAKTTPGGL. Residues 306 to 326 traverse the membrane as a helical segment; it reads FIVFFILGGLAMFASYVPEII. Residues 327 to 1159 are Cytoplasmic-facing; that stretch reads EIIGNRKKYG…PPIREVEDEC (833 aa). Residues 345–487 enclose the RCK N-terminal 1 domain; it reads RKHIVVCGHI…WNWKEGDDAI (143 aa). Mg(2+) is bound by residues E377, Q400, and E402. Residues 494 to 514 form a segment S7 region; sequence LGFIAQSCLAQGLSTMLANLF. Positions 551-571 are segment S8; sequence LSFPTVCELCFVKLKLLMIAI. Positions 615 to 619 are heme-binding motif; the sequence is CKACH. Residues 639–668 are disordered; it reads EQPSTLSPKKKQRNGGMRNSPSSSPKLMRH. T643 carries the post-translational modification Phosphothreonine. Phosphoserine occurs at positions 645, 658, and 662. The tract at residues 717-737 is segment S9; the sequence is VLSGHVVVCIFGHVSSALIGL. The 145-residue stretch at 719–863 folds into the RCK N-terminal 2 domain; that stretch reads SGHVVVCIFG…MDKSSPDNSP (145 aa). T850 carries the phosphothreonine modification. A phosphoserine mark is found at S858 and S862. The Calcium bowl signature appears at 883–905; it reads TELVNDTNVQFLDQDDDDDPDTE. Ca(2+) contacts are provided by Q892, D895, D898, and D900. Residues 912 to 932 are segment S10; sequence FACGTAFAVSVLDSLMSATYF. Residues 1066 to 1091 are compositionally biased toward low complexity; it reads RASLSHSSHSSQSSSKKSSSVHSIPS. The disordered stretch occupies residues 1066 to 1124; it reads RASLSHSSHSSQSSSKKSSSVHSIPSTANRQNRPKSRESRDKQTEKKWFTDEPDNAYPR. Residues 1100-1115 show a composition bias toward basic and acidic residues; that stretch reads KSRESRDKQTEKKWFT. Phosphoserine is present on residues S1101 and S1104.

Belongs to the potassium channel family. Calcium-activated (TC 1.A.1.3) subfamily. KCa1.1/KCNMA1 sub-subfamily. Homotetramer; which constitutes the calcium-activated potassium channel. Interacts with beta subunits KCNMB1, KCNMB2, KCNMB3 and KCNMB4. Interacts with gamma subunits LRRC26, LRRC38, LRRC52 and LRRC55. Beta and gamma subunits are accessory, and modulate its activity. Interacts with RAB11B. Phosphorylated. Phosphorylation by kinases such as PKA and/or PKG. In smooth muscles, phosphorylation affects its activity. Post-translationally, palmitoylation by ZDHHC22 and ZDHHC23 within the intracellular linker between the S0 and S1 transmembrane domains regulates localization to the plasma membrane. Depalmitoylated by LYPLA1 and LYPLAL1, leading to retard exit from the trans-Golgi network. In terms of tissue distribution, expressed in all vascular and smooth muscles.

It is found in the cell membrane. The enzyme catalyses K(+)(in) = K(+)(out). With respect to regulation, ethanol and carbon monoxide-bound heme increase channel activation. Heme inhibits channel activation. Functionally, potassium channel activated by both membrane depolarization or increase in cytosolic Ca(2+) that mediates export of K(+). It is also activated by the concentration of cytosolic Mg(2+). Its activation dampens the excitatory events that elevate the cytosolic Ca(2+) concentration and/or depolarize the cell membrane. It therefore contributes to repolarization of the membrane potential. Plays a key role in controlling excitability in a number of systems, such as regulation of the contraction of smooth muscle, the tuning of hair cells in the cochlea, regulation of transmitter release, and innate immunity. In smooth muscles, its activation by high level of Ca(2+), caused by ryanodine receptors in the sarcoplasmic reticulum, regulates the membrane potential. In cochlea cells, its number and kinetic properties partly determine the characteristic frequency of each hair cell and thereby helps to establish a tonotopic map. Kinetics of KCNMA1 channels are determined by alternative splicing, phosphorylation status and its combination with modulating beta subunits. Highly sensitive to both iberiotoxin (IbTx) and charybdotoxin (CTX). The polypeptide is Calcium-activated potassium channel subunit alpha-1 (KCNMA1) (Canis lupus familiaris (Dog)).